The following is a 326-amino-acid chain: DNA-directed RNA polymerase subunit alpha (326 aa).

Residues 1–232 are alpha N-terminal domain (alpha-NTD); the sequence is MQGSARDFLK…EQLSSFVELE (232 aa). The segment at 246–326 is alpha C-terminal domain (alpha-CTD); the sequence is FDPQLLAAVD…NWPPVDLMSE (81 aa).

This sequence belongs to the RNA polymerase alpha chain family. As to quaternary structure, homodimer. The RNAP catalytic core consists of 2 alpha, 1 beta, 1 beta' and 1 omega subunit. When a sigma factor is associated with the core the holoenzyme is formed, which can initiate transcription.

It carries out the reaction RNA(n) + a ribonucleoside 5'-triphosphate = RNA(n+1) + diphosphate. Functionally, DNA-dependent RNA polymerase catalyzes the transcription of DNA into RNA using the four ribonucleoside triphosphates as substrates. The chain is DNA-directed RNA polymerase subunit alpha from Vesicomyosocius okutanii subsp. Calyptogena okutanii (strain HA).